Reading from the N-terminus, the 1321-residue chain is C-Jun-amino-terminal kinase-interacting protein 4 (1321 aa).

At methionine 1 the chain carries N-acetylmethionine. The 89-residue stretch at 7–95 (VVYQEEPGGS…ITQYEREKAL (89 aa)) folds into the RH1 domain. Positions 66-166 (AQDQEHQVEL…NALHQRHTEM (101 aa)) form a coiled coil. Phosphoserine is present on residues serine 109, serine 183, serine 185, serine 194, and serine 203. Residues 203-292 (SLGIFPLPAG…SDVATIPTDT (90 aa)) form a disordered region. Threonine 217 carries the phosphothreonine modification. The span at 236–253 (ELSQPRSHTSLKVSNSPE) shows a compositional bias: polar residues. Phosphoserine is present on residues serine 238, serine 251, serine 265, serine 268, and serine 272. Residues 266–285 (DVSQGGSKATTPASTANSDV) are compositionally biased toward polar residues. Position 292 is a phosphothreonine (threonine 292). Phosphoserine is present on residues serine 311, serine 329, serine 332, and serine 347. Phosphothreonine is present on residues threonine 348, threonine 365, and threonine 418. Positions 408–534 (REVENLILEN…LQEAVRWTEM (127 aa)) form a coiled coil. Positions 473–489 (LRKARAEAEDARQKAKD) are enriched in basic and acidic residues. Disordered regions lie at residues 473 to 500 (LRKARAEAEDARQKAKDDDDSDIPTAQR) and 563 to 600 (SSNTTKKPEPPVNLKYNAPTSHVTPSVKKRSSTLSQLP). An RH2 domain is found at 500–571 (RKRFTRVEMA…SSSNTTKKPE (72 aa)). The residue at position 586 (threonine 586) is a Phosphothreonine. The residue at position 588 (serine 588) is a Phosphoserine. Position 595 is a phosphothreonine (threonine 595). Residues serine 705, serine 728, serine 730, serine 732, and serine 733 each carry the phosphoserine modification. A coiled-coil region spans residues 724–758 (SKQRSASQSSLDKLDQELKEQQKELKNQEELSSLV). The segment at 854-906 (GAATSPSTNGASPVMDKPPEMEAENSEVDENVPTAEEATEATEGNAGSAEDTV) is disordered. The segment covering 855-864 (AATSPSTNGA) has biased composition (polar residues). The span at 874–883 (MEAENSEVDE) shows a compositional bias: acidic residues. Low complexity predominate over residues 894–903 (ATEGNAGSAE). Position 1188 is a phosphoserine (serine 1188). The interval 1239–1266 (PQSSSSGTDLTGDKAGPSAQEPGSQTPL) is disordered. A Phosphothreonine modification is found at threonine 1264.

Belongs to the JIP scaffold family. Homodimer. The homodimer interacts with ARF6, forming a heterotetramer. Homooligomer. Interacts with MAX, MAPK14, MAP3K3, MYC, KNS2 and MAP2K4. Interaction with KNS2 is important in the formation of ternary complex with MAPK8. Interacts with NFKB1. Interacts with PIP4P1. Interacts with PIKFYVE. As to quaternary structure, interacts with MAPK8, MAPK9, MAPK10. Phosphorylated by MAPK8 and MAPK14. In terms of tissue distribution, expressed only in testis on the round spermatids of stage I, II and II. Absent in spermatogonia and spermatocyte. Expressed in testis and in acute myeloid leukemia (AML) patients. As to expression, expressed in testis.

It is found in the cytoplasm. Its subcellular location is the perinuclear region. The protein localises to the lysosome membrane. The protein resides in the cytoplasmic vesicle. It localises to the secretory vesicle. It is found in the acrosome. With respect to regulation, may play a role in spermatozoa-egg-interaction. Its function is as follows. The JNK-interacting protein (JIP) group of scaffold proteins selectively mediates JNK signaling by aggregating specific components of the MAPK cascade to form a functional JNK signaling module. Regulates lysosomal positioning by acting as an adapter protein which links PIP4P1-positive lysosomes to the dynein-dynactin complex. Assists PIKFYVE selective functionality in microtubule-based endosome-to-TGN trafficking. This chain is C-Jun-amino-terminal kinase-interacting protein 4, found in Homo sapiens (Human).